Here is a 373-residue protein sequence, read N- to C-terminus: Probable G-protein coupled receptor 173 (373 aa).

The Extracellular segment spans residues 1–26 (MANTTGEPEEVSGALSLPSASAYVKL). The N-linked (GlcNAc...) asparagine glycan is linked to Asn3. The helical transmembrane segment at 27-47 (VLLGLIMCVSLAGNAILSLLV) threads the bilayer. The Cytoplasmic portion of the chain corresponds to 48–59 (LKERALHKAPYY). A helical membrane pass occupies residues 60-80 (FLLDLCLADGIRSAICFPFVL). The Extracellular portion of the chain corresponds to 81-97 (ASVRHGSSWTFSALSCK). Cysteines 96 and 174 form a disulfide. Residues 98 to 118 (IVAFMAVLFCFHAAFMLFCIS) traverse the membrane as a helical segment. Topologically, residues 119–139 (VTRYMAIAHHRFYAKRMTLWT) are cytoplasmic. The helical transmembrane segment at 140 to 160 (CAAVICMAWTLSVAMAFPPVF) threads the bilayer. Topologically, residues 161–188 (DVGTYKFIREEDQCIFEHRYFKANDTLG) are extracellular. The N-linked (GlcNAc...) asparagine glycan is linked to Asn184. Residues 189–209 (FMLMLAVLMAATHAVYGKLLL) traverse the membrane as a helical segment. The Cytoplasmic portion of the chain corresponds to 210–287 (FEYRHRKMKP…VKGEKQLGRM (78 aa)). The chain crosses the membrane as a helical span at residues 288–308 (FYAITLLFLLLWSPYIVACYW). At 309–322 (RVFVKACAVPHRYL) the chain is on the extracellular side. The chain crosses the membrane as a helical span at residues 323–343 (ATAVWMSFAQAAVNPIVCFLL). Residues 344-373 (NKDLKKCLRTHAPCWGTGGAPAPREPYCVM) lie on the Cytoplasmic side of the membrane.

This sequence belongs to the G-protein coupled receptor 1 family. As to expression, expressed in the ovary, specifically in granulosa cells of follicles that have passed the primary stage and in oocytes (at protein level). Expressed in preadipocytes.

The protein resides in the cell membrane. Is a receptor for the SMIM20 derived peptides Phoenixin-14 and Phoenixin-20. It mediates the Phoenixin-14 and Phoenixin-20 augmentation of gonadotropin-releasing hormone (GNRH) signaling in the hypothalamus and pituitary gland. In the ovary, it mediates the effects of Phoenixin-14 and Phoenixin-20 induced granulosa cell proliferation during follicular growth. The sequence is that of Probable G-protein coupled receptor 173 (Gpr173) from Mus musculus (Mouse).